Consider the following 281-residue polypeptide: 33 kDa chaperonin (281 aa).

Disulfide bonds link Cys229–Cys231 and Cys262–Cys265.

This sequence belongs to the HSP33 family. Post-translationally, under oxidizing conditions two disulfide bonds are formed involving the reactive cysteines. Under reducing conditions zinc is bound to the reactive cysteines and the protein is inactive.

It is found in the cytoplasm. Redox regulated molecular chaperone. Protects both thermally unfolding and oxidatively damaged proteins from irreversible aggregation. Plays an important role in the bacterial defense system toward oxidative stress. This chain is 33 kDa chaperonin, found in Pseudoalteromonas translucida (strain TAC 125).